A 309-amino-acid chain; its full sequence is Elongation factor Ts, mitochondrial (309 aa).

It belongs to the EF-Ts family.

The protein resides in the mitochondrion. Functionally, associates with the EF-Tu.GDP complex and induces the exchange of GDP to GTP. It remains bound to the aminoacyl-tRNA.EF-Tu.GTP complex up to the GTP hydrolysis stage on the ribosome. The chain is Elongation factor Ts, mitochondrial (tsfm) from Salmo salar (Atlantic salmon).